Here is a 227-residue protein sequence, read N- to C-terminus: Small ribosomal subunit protein uS3 (227 aa).

A KH type-2 domain is found at 39 to 107 (VRQLLQKRLK…PVHITIEEVR (69 aa)).

This sequence belongs to the universal ribosomal protein uS3 family. Part of the 30S ribosomal subunit. Forms a tight complex with proteins S10 and S14.

Binds the lower part of the 30S subunit head. Binds mRNA in the 70S ribosome, positioning it for translation. The sequence is that of Small ribosomal subunit protein uS3 from Coxiella burnetii (strain CbuK_Q154) (Coxiella burnetii (strain Q154)).